The chain runs to 248 residues: Type III pantothenate kinase (248 aa).

ATP is bound at residue 8–15 (DAGNTRTK). Substrate contacts are provided by residues Tyr-87 and 94–97 (GVDR). Residue Asp-96 is the Proton acceptor of the active site. Thr-119 provides a ligand contact to ATP. Substrate is bound at residue Thr-173.

The protein belongs to the type III pantothenate kinase family. Homodimer. NH4(+) serves as cofactor. Requires K(+) as cofactor.

The protein localises to the cytoplasm. The enzyme catalyses (R)-pantothenate + ATP = (R)-4'-phosphopantothenate + ADP + H(+). It functions in the pathway cofactor biosynthesis; coenzyme A biosynthesis; CoA from (R)-pantothenate: step 1/5. Its function is as follows. Catalyzes the phosphorylation of pantothenate (Pan), the first step in CoA biosynthesis. The sequence is that of Type III pantothenate kinase from Methylobacillus flagellatus (strain ATCC 51484 / DSM 6875 / VKM B-1610 / KT).